Reading from the N-terminus, the 268-residue chain is Unknown seed protein USP (268 aa).

The first 25 residues, 1-25 (MEFAHLTVLSLFCLAFVGITATSSG), serve as a signal peptide directing secretion. Residues 68 to 259 (LFFEHDLHPG…GNKAAAWVPN (192 aa)) enclose the BURP domain.

As to expression, expressed in seeds. Detected only in the embryo. In germinating seedlings, detected in roots, root caps, root hairs, vascular bundle, mesophyll cells and epidermal cells of the cotyledons and the hypocotyl.

Its subcellular location is the golgi apparatus. The protein resides in the golgi stack. It is found in the prevacuolar compartment. Associated with the protein storage vacuole formation. The chain is Unknown seed protein USP from Vicia faba (Broad bean).